The sequence spans 507 residues: Tabersonine/lochnericine 19-hydroxylase (507 aa).

The chain crosses the membrane as a helical span at residues 8 to 28 (FFVLLLPFFIGIAFIYKLWNF). Asn167 carries N-linked (GlcNAc...) asparagine glycosylation. Cys447 contacts heme.

This sequence belongs to the cytochrome P450 family. Heme serves as cofactor. As to expression, confined to roots.

Its subcellular location is the endoplasmic reticulum membrane. The catalysed reaction is (-)-tabersonine + reduced [NADPH--hemoprotein reductase] + O2 = (-)-(R)-19-hydroxytabersonine + oxidized [NADPH--hemoprotein reductase] + H2O + H(+). It catalyses the reaction lochnericine + reduced [NADPH--hemoprotein reductase] + O2 = horhammericine + oxidized [NADPH--hemoprotein reductase] + H2O + H(+). It carries out the reaction (-)-vincadifformine + reduced [NADPH--hemoprotein reductase] + O2 = (-)-minovincinine + oxidized [NADPH--hemoprotein reductase] + H2O + H(+). The protein operates within alkaloid biosynthesis. Functionally, component of the monoterpenoid indole alkaloids (MIAs, e.g. echitovenine, tabersonine, lochnericine, 19-hydroxytabersonine and horhammericine) biosynthetic pathway; MIAs are used in cancer treatment and other medical applications. Cytochrome P450 catalyzing the conversion of (-)-tabersonine to 19-hydroxytabersonine, of lochnericine to horhammericine and of (-)-vincadifformine to (-)-minovincinine. The chain is Tabersonine/lochnericine 19-hydroxylase from Catharanthus roseus (Madagascar periwinkle).